Reading from the N-terminus, the 122-residue chain is Big defensin (122 aa).

Residues 1 to 28 form the signal peptide; sequence MTRPSLVRCYSLFFTALIVMAIICPAWS. A propeptide spanning residues 29–34 is cleaved from the precursor; the sequence is EEIPKS. 3 disulfides stabilise this stretch: Cys-88–Cys-119, Cys-95–Cys-114, and Cys-99–Cys-120.

This sequence belongs to the big defensin family. As to expression, expressed in hemocytes.

The protein localises to the secreted. Its function is as follows. Significantly inhibits the growth of Gram-negative and Gram-positive bacteria and fungi in vitro. The polypeptide is Big defensin (Argopecten irradians (Bay scallop)).